A 147-amino-acid chain; its full sequence is uncharacterized protein (147 aa).

2 disordered regions span residues 1–49 and 125–147; these read MRTP…NLNE and SPSPTTSFNSTNPQNTHQTRKSN. Low complexity-rich tracts occupy residues 8 to 49 and 125 to 140; these read NNNY…NLNE and SPSPTTSFNSTNPQNT.

This is an uncharacterized protein from Dictyostelium discoideum (Social amoeba).